Consider the following 355-residue polypeptide: Protein-glutamate methylesterase/protein-glutamine glutaminase (355 aa).

The Response regulatory domain maps to 3 to 121 (NVLVVEDSPV…HPDHEATARK (119 aa)). At Asp-54 the chain carries 4-aspartylphosphate. One can recognise a CheB-type methylesterase domain in the interval 154–348 (PLLNRVAPAR…AALTNLVAER (195 aa)). Active-site residues include Ser-170, His-197, and Asp-290.

This sequence belongs to the CheB family. Post-translationally, phosphorylated by CheA. Phosphorylation of the N-terminal regulatory domain activates the methylesterase activity.

The protein resides in the cytoplasm. It carries out the reaction [protein]-L-glutamate 5-O-methyl ester + H2O = L-glutamyl-[protein] + methanol + H(+). The enzyme catalyses L-glutaminyl-[protein] + H2O = L-glutamyl-[protein] + NH4(+). Involved in chemotaxis. Part of a chemotaxis signal transduction system that modulates chemotaxis in response to various stimuli. Catalyzes the demethylation of specific methylglutamate residues introduced into the chemoreceptors (methyl-accepting chemotaxis proteins or MCP) by CheR. Also mediates the irreversible deamidation of specific glutamine residues to glutamic acid. The chain is Protein-glutamate methylesterase/protein-glutamine glutaminase from Nitrosospira multiformis (strain ATCC 25196 / NCIMB 11849 / C 71).